Reading from the N-terminus, the 173-residue chain is MTYLVSLFLLGLVLGLVAVASNPAPYFAALGLVVAAGVGCGVLVGHGGSFLSLVLFLIYLGGMLVVFAYSAALAAEPFPESWGDRSVLGYVVVYTVGVVLVAGLFWGGWYETSWVAVDEFKEFSVLRGDTSGVALMYSHGGGMLIACAWVLLLTLFVVLELTRGLSRGALRAV.

The next 5 membrane-spanning stretches (helical) occupy residues 1 to 21 (MTYL…AVAS), 24 to 44 (APYF…GVLV), 53 to 73 (LVLF…SAAL), 87 to 107 (VLGY…LFWG), and 141 to 161 (GGML…VLEL).

Belongs to the complex I subunit 6 family.

The protein localises to the mitochondrion membrane. It carries out the reaction a ubiquinone + NADH + 5 H(+)(in) = a ubiquinol + NAD(+) + 4 H(+)(out). In terms of biological role, core subunit of the mitochondrial membrane respiratory chain NADH dehydrogenase (Complex I) that is believed to belong to the minimal assembly required for catalysis. Complex I functions in the transfer of electrons from NADH to the respiratory chain. The immediate electron acceptor for the enzyme is believed to be ubiquinone. The sequence is that of NADH-ubiquinone oxidoreductase chain 6 (MT-ND6) from Oncorhynchus mykiss (Rainbow trout).